The sequence spans 506 residues: Proline--tRNA ligase (506 aa).

Belongs to the class-II aminoacyl-tRNA synthetase family. ProS type 3 subfamily. Homodimer.

It localises to the cytoplasm. The catalysed reaction is tRNA(Pro) + L-proline + ATP = L-prolyl-tRNA(Pro) + AMP + diphosphate. In terms of biological role, catalyzes the attachment of proline to tRNA(Pro) in a two-step reaction: proline is first activated by ATP to form Pro-AMP and then transferred to the acceptor end of tRNA(Pro). The chain is Proline--tRNA ligase from Rhodopirellula baltica (strain DSM 10527 / NCIMB 13988 / SH1).